We begin with the raw amino-acid sequence, 182 residues long: Lipoprotein signal peptidase (182 aa).

Transmembrane regions (helical) follow at residues leucine 15–isoleucine 35, leucine 44–glycine 64, alanine 65–isoleucine 85, and proline 97–valine 117. Active-site residues include aspartate 140 and aspartate 162. A helical transmembrane segment spans residues tryptophan 155–threonine 175.

Belongs to the peptidase A8 family.

The protein resides in the cell inner membrane. It carries out the reaction Release of signal peptides from bacterial membrane prolipoproteins. Hydrolyzes -Xaa-Yaa-Zaa-|-(S,diacylglyceryl)Cys-, in which Xaa is hydrophobic (preferably Leu), and Yaa (Ala or Ser) and Zaa (Gly or Ala) have small, neutral side chains.. Its pathway is protein modification; lipoprotein biosynthesis (signal peptide cleavage). In terms of biological role, this protein specifically catalyzes the removal of signal peptides from prolipoproteins. The sequence is that of Lipoprotein signal peptidase from Leptospira borgpetersenii serovar Hardjo-bovis (strain L550).